The sequence spans 103 residues: Protein reprimo A (103 aa).

Residues 50–70 (IVQIAVMCVLSLTVVFGIFFL) traverse the membrane as a helical segment.

It belongs to the reprimo family.

The protein resides in the cytoplasm. Its subcellular location is the membrane. Functionally, may be involved in the regulation of p53-dependent G2 arrest of the cell cycle. This is Protein reprimo A from Danio rerio (Zebrafish).